We begin with the raw amino-acid sequence, 1002 residues long: Collagen alpha-2(I) chain (1002 aa).

A disordered region spans residues 1-1002; the sequence is SGGFDFSFLP…PGPPGPPGAS (1002 aa). 4-hydroxyproline occurs at positions 10, 13, 28, and 34. The span at 17 to 60 shows a compositional bias: low complexity; sequence GPMGLMGPRGPPGASGAPGPQGFQGPAGEPGEPGQTGPAGARGP. Lysine 89 carries the 5-hydroxylysine; alternate modification. Lysine 89 carries an O-linked (Gal...) hydroxylysine; alternate glycan. 2 stretches are compositionally biased toward low complexity: residues 145–166 and 211–232; these read SRGS…SAGP and PGAN…AGAP. Residues 266 to 275 show a composition bias toward gly residues; sequence GESGGKGEPG. Residues 276 to 286 are compositionally biased toward low complexity; sequence SAGPQGPPGSS. The segment covering 308–317 has biased composition (gly residues); sequence GLRGGPGSRG. The span at 330–346 shows a compositional bias: low complexity; it reads PAGARGASGPAGVRGPS. A 4-hydroxyproline mark is found at proline 352 and proline 355. Low complexity predominate over residues 381–400; sequence LPGIDGRPGPIGPAGARGEA. Positions 449–458 are enriched in gly residues; sequence GVQGGKGEQG. Low complexity-rich tracts occupy residues 505–522 and 534–544; these read PGES…SRGP and EPGVVGAPGTA. The span at 545–554 shows a compositional bias: gly residues; that stretch reads GPAGSGGLPG. 2 stretches are compositionally biased toward low complexity: residues 577–621 and 628–648; these read VGTT…PRGS and VGPA…QPGA. Residues 649–658 show a composition bias toward basic and acidic residues; the sequence is KGERGTKGPK. Residues 666-676 are compositionally biased toward low complexity; it reads PTGPVGSAGPA. Positions 686–695 are enriched in gly residues; sequence GSRGDGGPPG. Over residues 697 to 706 the composition is skewed to low complexity; it reads TGFPGAAGRT. The span at 743–752 shows a compositional bias: gly residues; it reads GETGAGGPPG. 2 stretches are compositionally biased toward low complexity: residues 760-787 and 795-805; these read SGEP…LGLP and LPGVAGAVGEP. The segment covering 806–828 has biased composition (gly residues); that stretch reads GPLGIGPPGARGPSGGVGPGVNG. The segment covering 833–851 has biased composition (basic and acidic residues); the sequence is AGRDGPPGRDGLPGHKGER. Residues 853–898 are compositionally biased toward low complexity; that stretch reads YAGNAGPVGAAGAPGPHGAVGPAGKHGNRGEPGPVGSAGPVGALGP. Basic and acidic residues predominate over residues 908-919; it reads RGDKGEAGDKGP. Residues 987–1002 show a composition bias toward pro residues; the sequence is SGPPGPPGPPGPPGAS.

This sequence belongs to the fibrillar collagen family. Trimers of one alpha 2(I) and two alpha 1(I) chains. Interacts (via C-terminus) with TMEM131 (via PapD-L domain); the interaction is direct and is involved in assembly and TRAPPIII ER-to-Golgi transport complex-dependent secretion of collagen. Prolines at the third position of the tripeptide repeating unit (G-X-Y) are hydroxylated in some or all of the chains. Expressed in bones.

Its subcellular location is the secreted. The protein localises to the extracellular space. It is found in the extracellular matrix. Functionally, type I collagen is a member of group I collagen (fibrillar forming collagen). This is Collagen alpha-2(I) chain from Glossotherium robustum (Ground sloth).